A 357-amino-acid chain; its full sequence is Retinoic acid-induced protein 3 (357 aa).

Residues 1–33 are Extracellular-facing; sequence MATTVPDGCRNGLKSKYYRLCDKAEAWGIVLET. A helical transmembrane segment spans residues 34-54; it reads VATAGVVTSVAFMLTLPILVC. The Cytoplasmic portion of the chain corresponds to 55-68; that stretch reads KVQDSNRRKMLPTQ. A helical transmembrane segment spans residues 69-89; sequence FLFLLGVLGIFGLTFAFIIGL. The Extracellular segment spans residues 90-97; sequence DGSTGPTR. A helical transmembrane segment spans residues 98–118; it reads FFLFGILFSICFSCLLAHAVS. Topologically, residues 119–129 are cytoplasmic; the sequence is LTKLVRGRKPL. The helical transmembrane segment at 130–150 threads the bilayer; the sequence is SLLVILGLAVGFSLVQDVIAI. Residues 151-176 lie on the Extracellular side of the membrane; the sequence is EYIVLTMNRTNVNVFSELSAPRRNED. A glycan (N-linked (GlcNAc...) asparagine) is linked at Asn-158. The helical transmembrane segment at 177–197 threads the bilayer; that stretch reads FVLLLTYVLFLMALTFLMSSF. Residues 198–212 lie on the Cytoplasmic side of the membrane; sequence TFCGSFTGWKRHGAH. The helical transmembrane segment at 213-233 threads the bilayer; sequence IYLTMLLSIAIWVAWITLLML. The Extracellular portion of the chain corresponds to 234-247; sequence PDFDRRWDDTILSS. Residues 248-268 form a helical membrane-spanning segment; it reads ALAANGWVFLLAYVSPEFWLL. The Cytoplasmic segment spans residues 269–357; sequence TKQRNPMDYP…KDYEVKKEGS (89 aa). Ser-301 carries the phosphoserine modification. Residues Tyr-317 and Tyr-320 each carry the phosphotyrosine modification. Ser-345 carries the post-translational modification Phosphoserine. Residues Tyr-347 and Tyr-350 each carry the phosphotyrosine modification.

This sequence belongs to the G-protein coupled receptor 3 family. Interacts (via its transmembrane domain) with EGFR. Post-translationally, phosphorylated in two conserved double-tyrosine motifs, Tyr-317/Tyr-320 and Tyr-347/Tyr-350, by EGFR; leading to inactivation of the tumor suppressive function of GPRC5A in lung cancer cells. Tyr-317 and Tyr-320 are the preferred residues responsible for EGFR-mediated GPRC5A phosphorylation. Expressed at high level in fetal and adult lung tissues but repressed in most human lung cancers. Constitutively expressed in fetal kidney and adult placenta, kidney, prostate, testis, ovary, small intestine, colon, stomach, and spinal cord at low to moderate levels. Not detectable in fetal heart, brain, and liver and adult heart, brain, liver, skeletal muscle, pancreas, spleen, thymus, and peripheral leukocytes. According to PubMed:10783259, expressed at low but detectable level in pancreas and heart.

It localises to the cell membrane. Its subcellular location is the cytoplasmic vesicle membrane. Orphan receptor. Could be involved in modulating differentiation and maintaining homeostasis of epithelial cells. This retinoic acid-inducible GPCR provide evidence for a possible interaction between retinoid and G-protein signaling pathways. Functions as a negative modulator of EGFR signaling. May act as a lung tumor suppressor. The protein is Retinoic acid-induced protein 3 (GPRC5A) of Homo sapiens (Human).